A 186-amino-acid polypeptide reads, in one-letter code: TATA-box-binding protein E (186 aa).

2 tandem repeats follow at residues 10–86 (IENV…FDKL) and 101–179 (VQNI…TSRL).

The protein belongs to the TBP family.

General factor that plays a role in the activation of archaeal genes transcribed by RNA polymerase. Binds specifically to the TATA box promoter element which lies close to the position of transcription initiation. In Halobacterium salinarum (strain ATCC 700922 / JCM 11081 / NRC-1) (Halobacterium halobium), this protein is TATA-box-binding protein E (tbpE).